A 329-amino-acid chain; its full sequence is 3-dehydroquinate synthase (329 aa).

It belongs to the archaeal-type DHQ synthase family.

The catalysed reaction is 2-amino-2,3,7-trideoxy-D-lyxo-hept-6-ulosonate + NAD(+) + H2O = 3-dehydroquinate + NH4(+) + NADH + H(+). In terms of biological role, catalyzes the oxidative deamination and cyclization of 2-amino-3,7-dideoxy-D-threo-hept-6-ulosonic acid (ADH) to yield 3-dehydroquinate (DHQ), which is fed into the canonical shikimic pathway of aromatic amino acid biosynthesis. This chain is 3-dehydroquinate synthase, found in Methanoregula boonei (strain DSM 21154 / JCM 14090 / 6A8).